A 283-amino-acid polypeptide reads, in one-letter code: Pantothenate synthetase (283 aa).

An ATP-binding site is contributed by 34-41 (MGALHDGH). Catalysis depends on H41, which acts as the Proton donor. Q65 serves as a coordination point for (R)-pantoate. Q65 is a binding site for beta-alanine. ATP is bound at residue 152–155 (GQKD). A (R)-pantoate-binding site is contributed by Q158. ATP is bound by residues V181 and 189–192 (MSSR).

This sequence belongs to the pantothenate synthetase family. Homodimer.

It is found in the cytoplasm. It catalyses the reaction (R)-pantoate + beta-alanine + ATP = (R)-pantothenate + AMP + diphosphate + H(+). Its pathway is cofactor biosynthesis; (R)-pantothenate biosynthesis; (R)-pantothenate from (R)-pantoate and beta-alanine: step 1/1. In terms of biological role, catalyzes the condensation of pantoate with beta-alanine in an ATP-dependent reaction via a pantoyl-adenylate intermediate. The polypeptide is Pantothenate synthetase (Nitrobacter hamburgensis (strain DSM 10229 / NCIMB 13809 / X14)).